Consider the following 225-residue polypeptide: C-reactive protein (225 aa).

The signal sequence occupies residues Met-1–Gly-19. The 202-residue stretch at Ser-24 to Pro-225 folds into the Pentraxin (PTX) domain. Cysteines 55 and 116 form a disulfide. 4 residues coordinate Ca(2+): Asn-80, Gln-158, Asp-159, and Gln-169.

This sequence belongs to the pentraxin family. Homopentamer. Pentraxin (or pentaxin) have a discoid arrangement of 5 non-covalently bound subunits. Interacts with FCN1; may regulate monocyte activation by FCN1. Ca(2+) is required as a cofactor. As to expression, found in plasma.

Its subcellular location is the secreted. Functionally, displays several functions associated with host defense: it promotes agglutination, bacterial capsular swelling, phagocytosis and complement fixation through its calcium-dependent binding to phosphorylcholine. Can interact with DNA and histones and may scavenge nuclear material released from damaged circulating cells. This chain is C-reactive protein (CRP), found in Cavia porcellus (Guinea pig).